A 720-amino-acid chain; its full sequence is Polyribonucleotide nucleotidyltransferase (720 aa).

Asp487 and Asp493 together coordinate Mg(2+). In terms of domain architecture, KH spans 554 to 613 (PRIETFKIPTDKIREVIGTGGKVIREIVEKTGAKVNIEDDGTVKVASSDGEAMKAAIKWI). Positions 623-691 (GQIYDGTVVK…DRGKTRLSMK (69 aa)) constitute an S1 motif domain. Residues 699–720 (EDLEAKDKVAEGEKAPREAAGE) are disordered. The segment covering 701–720 (LEAKDKVAEGEKAPREAAGE) has biased composition (basic and acidic residues).

This sequence belongs to the polyribonucleotide nucleotidyltransferase family. Mg(2+) serves as cofactor.

Its subcellular location is the cytoplasm. The catalysed reaction is RNA(n+1) + phosphate = RNA(n) + a ribonucleoside 5'-diphosphate. Its function is as follows. Involved in mRNA degradation. Catalyzes the phosphorolysis of single-stranded polyribonucleotides processively in the 3'- to 5'-direction. This Bradyrhizobium diazoefficiens (strain JCM 10833 / BCRC 13528 / IAM 13628 / NBRC 14792 / USDA 110) protein is Polyribonucleotide nucleotidyltransferase.